Here is a 339-residue protein sequence, read N- to C-terminus: Type IV secretion system protein PtlH homolog (339 aa).

The protein belongs to the GSP E family.

The protein is Type IV secretion system protein PtlH homolog (ptlH) of Bordetella bronchiseptica (strain ATCC BAA-588 / NCTC 13252 / RB50) (Alcaligenes bronchisepticus).